Reading from the N-terminus, the 685-residue chain is MSKANRQILVTCALPYANGPIHLGHMLEHIQADIWVRFQRMRGHEIYFVCADDAHGTPIMLKADQMGIAPEQLIADVQKSHYADFCGFNISFDNYHSTHSEENREFSEMIYNRLKENGFIKTRAISQLFDPEKSMFLPDRFVKGTCPKCKAEDQYGDNCEVCSATYSPTELIAPRSVVSGATPIIKESEHFFFDLPSFEAMLKQWNRSGALQSEVANKMQEWFDAGLQQWDISRDAPYFGFKIPGTENKYFYVWLDAPIGYMASFKNLCNRQNIDFDRFWNKDSQAELYHFIGKDIMYFHSLFWPAMLEGADLRKPSNIFVHGYVTVNGEKMSKSRGTFIQAATYLKHLDPECLRYYYAAKLSNRIDDLDLNLEDFVQRVNTDLVNKLVNLASRNAGFIQKRFAGKLADKLDDEALFNEFIAQSAQIAAYYENREFGKAVREIMALTDKANKYVDEKAPWVIAKEQGRETELQRVCSMGIQLFRVLMGYLKPVLPKLAERSEAFLQAELTWDNLTQPLLDHEIAPFKALFSRVDSKQIEAMIEASKAENAAVNSSPKAEKTAKKTTALESEFEPLEAEISIDDFAKMDLRVAKVISCEAVPESKKLLKFQLDLGFETRQVLSGIKAAYGNPEELMGRFVIMVANLAPRKMKFGMSEGMILSAGSGGEDLFLLDVDAGVKAGSRVK.

A 'HIGH' region motif is present at residues 15–25 (PYANGPIHLGH). Zn(2+)-binding residues include cysteine 146, cysteine 149, cysteine 159, and cysteine 162. The 'KMSKS' region signature appears at 331–335 (KMSKS). Lysine 334 is a binding site for ATP. The region spanning 583-685 (DFAKMDLRVA…AGVKAGSRVK (103 aa)) is the tRNA-binding domain.

This sequence belongs to the class-I aminoacyl-tRNA synthetase family. MetG type 1 subfamily. In terms of assembly, homodimer. It depends on Zn(2+) as a cofactor.

The protein localises to the cytoplasm. It carries out the reaction tRNA(Met) + L-methionine + ATP = L-methionyl-tRNA(Met) + AMP + diphosphate. Functionally, is required not only for elongation of protein synthesis but also for the initiation of all mRNA translation through initiator tRNA(fMet) aminoacylation. The protein is Methionine--tRNA ligase of Actinobacillus succinogenes (strain ATCC 55618 / DSM 22257 / CCUG 43843 / 130Z).